The sequence spans 277 residues: Orotidine 5'-phosphate decarboxylase (277 aa).

Substrate is bound by residues Asp40, 62 to 64 (KTH), 93 to 102 (DRKFIDIGNT), Tyr229, and Arg247. The active-site Proton donor is Lys95.

It belongs to the OMP decarboxylase family.

The catalysed reaction is orotidine 5'-phosphate + H(+) = UMP + CO2. The protein operates within pyrimidine metabolism; UMP biosynthesis via de novo pathway; UMP from orotate: step 2/2. This Aspergillus kawachii (White koji mold) protein is Orotidine 5'-phosphate decarboxylase (pyrG).